The sequence spans 439 residues: tRNA-2-methylthio-N(6)-dimethylallyladenosine synthase (439 aa).

One can recognise an MTTase N-terminal domain in the interval 2 to 115 (KGLYIKTYGC…LPELIVKASR (114 aa)). The [4Fe-4S] cluster site is built by Cys11, Cys47, Cys78, Cys155, Cys159, and Cys162. Positions 141–372 (NSQGSSAFLA…QKLISKQQLE (232 aa)) constitute a Radical SAM core domain. The TRAM domain occupies 375 to 439 (QSMVGKTIPV…QSSLLGCAFH (65 aa)).

Belongs to the methylthiotransferase family. MiaB subfamily. Monomer. [4Fe-4S] cluster serves as cofactor.

It is found in the cytoplasm. The catalysed reaction is N(6)-dimethylallyladenosine(37) in tRNA + (sulfur carrier)-SH + AH2 + 2 S-adenosyl-L-methionine = 2-methylsulfanyl-N(6)-dimethylallyladenosine(37) in tRNA + (sulfur carrier)-H + 5'-deoxyadenosine + L-methionine + A + S-adenosyl-L-homocysteine + 2 H(+). In terms of biological role, catalyzes the methylthiolation of N6-(dimethylallyl)adenosine (i(6)A), leading to the formation of 2-methylthio-N6-(dimethylallyl)adenosine (ms(2)i(6)A) at position 37 in tRNAs that read codons beginning with uridine. The protein is tRNA-2-methylthio-N(6)-dimethylallyladenosine synthase of Wolbachia pipientis wMel.